We begin with the raw amino-acid sequence, 1373 residues long: TAL effector protein PthXo1 (1373 aa).

Disordered stretches follow at residues 1–68 and 127–152; these read MDPI…SAGS and AARPPRAKPAPRRRAAQPSDASPAAQ. Residues 131 to 141 are compositionally biased toward basic residues; it reads PRAKPAPRRRA. The segment covering 142 to 152 has biased composition (low complexity); it reads AQPSDASPAAQ. A Cryptic repeat -1 repeat occupies 221-239; the sequence is THEDIVGVGKQWSGARALE. One copy of the Cryptic repeat 0 repeat lies at 256-273; that stretch reads DTGQLVKIAKRGGVTAVE. 23 Core repeat repeats span residues 289–322, 323–356, 357–390, 391–424, 425–458, 459–492, 493–525, 526–559, 560–593, 594–627, 628–661, 662–695, 696–729, 730–763, 764–797, 798–831, 832–865, 866–899, 900–933, 934–967, 968–1001, 1002–1034, and 1035–1068; these read LTPAQVVAIASNNGGKQALETVQRLLPVLCQAHG, LTPAQVVAIASHDGGKQALETMQRLLPVLCQAHG, LPPDQVVAIASNIGGKQALETVQRLLPVLCQAHG, LTPDQVVAIASHGGGKQALETVQRLLPVLCQAHG, LTPDQVVAIASHDGGKQALETVQRLLPVLCQAHG, LTPDQVVAIASNGGGKQALETVQRLLPVLCQAHG, LTPDQVVAIASNGGKQALETVQRLLPVLCQAHG, LTPDQVVAIASHDGGKQALETVQRLLPVLCQTHG, LTPAQVVAIASHDGGKQALETVQQLLPVLCQAHG, LTPDQVVAIASNIGGKQALATVQRLLPVLCQAHG, LTQVQVVAIASNIGGKQALETVQRLLPVLCQAHG, LTPAQVVAIASHDGGKQALETVQRLLPVLCQAHG, LTQEQVVAIASNNGGKQALETVQRLLPVLCQAHG, LTPAQVVAIASNIGGKQALETVQRLLPVLCQDHG, LTLAQVVAIASNIGGKQALETVQRLLPVLCQAHG, LTQDQVVAIASNIGGKQALETVQRLLPVLCQDHG, LTPDQVVAIASNIGGKQALETVQRLLPVLCQDHG, LTLDQVVAIASNGGKQALETVQRLLPVLCQDHG, and LTPDQVVAIASNSGGKQALETVQRLLPVLCQDHG. HEAT repeat units lie at residues 714–760, 782–828, 850–893, and 918–961; these read LETV…VLCQ and LETV…LLPV. The HEAT 5 repeat unit spans residues 1053–1091; it reads LETVQRLLPVLCQDHGLTPNQVVAIASNGGKQALESIVA. One copy of the Core repeat 23.5 repeat lies at 1069-1087; it reads LTPNQVVAIASNGGKQALE. The acidic activation domain stretch occupies residues 1136-1364; the sequence is RVNRRIGERT…ELAWLMELLP (229 aa). The Nuclear localization signal NLS1 signature appears at 1222–1225; the sequence is KRAK. The disordered stretch occupies residues 1250 to 1286; sequence LDAPSPMHEGDQTGASSRKRSRSDRAVTGPSAQHSFE. Residues 1268–1271 carry the Nuclear localization signal NLS2 motif; it reads KRSR. A Nuclear localization signal NLS3 motif is present at residues 1305-1308; that stretch reads KRPR.

It belongs to the transcription activator-like effector (TALE) family.

It localises to the secreted. Its subcellular location is the host nucleus. In terms of biological role, avirulence protein. Acts as a transcription factor in rice, inducing expression of a number of host genes including SWEET11 (Os8N3, XA13, AC Q6YZF3) in susceptible plants with the Xa13 allele. Plants with the xa13 allele, which has an altered promoter, are resistant to bacterial blight caused by this bacterial strain and do not induce SWEET11. The xa13 allele elicits an atypical hypersensitive response (HR). PthXo1 binds SWEET11 promoter DNA in a sequence-specific manner. In Xanthomonas oryzae pv. oryzae (strain PXO99A), this protein is TAL effector protein PthXo1 (pthXo1).